We begin with the raw amino-acid sequence, 194 residues long: ATP-dependent Clp protease proteolytic subunit (194 aa).

Serine 98 functions as the Nucleophile in the catalytic mechanism. The active site involves histidine 123.

This sequence belongs to the peptidase S14 family. In terms of assembly, fourteen ClpP subunits assemble into 2 heptameric rings which stack back to back to give a disk-like structure with a central cavity, resembling the structure of eukaryotic proteasomes.

It is found in the cytoplasm. It carries out the reaction Hydrolysis of proteins to small peptides in the presence of ATP and magnesium. alpha-casein is the usual test substrate. In the absence of ATP, only oligopeptides shorter than five residues are hydrolyzed (such as succinyl-Leu-Tyr-|-NHMec, and Leu-Tyr-Leu-|-Tyr-Trp, in which cleavage of the -Tyr-|-Leu- and -Tyr-|-Trp bonds also occurs).. Its function is as follows. Cleaves peptides in various proteins in a process that requires ATP hydrolysis. Has a chymotrypsin-like activity. Plays a major role in the degradation of misfolded proteins. In Sodalis glossinidius (strain morsitans), this protein is ATP-dependent Clp protease proteolytic subunit.